The sequence spans 329 residues: Uroporphyrinogen decarboxylase (329 aa).

Substrate contacts are provided by residues 22–26 (RQVGR), D71, Y140, S195, and H307.

The protein belongs to the uroporphyrinogen decarboxylase family. In terms of assembly, homodimer.

The protein localises to the cytoplasm. It carries out the reaction uroporphyrinogen III + 4 H(+) = coproporphyrinogen III + 4 CO2. It participates in porphyrin-containing compound metabolism; protoporphyrin-IX biosynthesis; coproporphyrinogen-III from 5-aminolevulinate: step 4/4. In terms of biological role, catalyzes the decarboxylation of four acetate groups of uroporphyrinogen-III to yield coproporphyrinogen-III. The polypeptide is Uroporphyrinogen decarboxylase (Chlamydia pneumoniae (Chlamydophila pneumoniae)).